Here is a 646-residue protein sequence, read N- to C-terminus: Secretogranin-1 (646 aa).

The signal sequence occupies residues 1 to 20; that stretch reads MQPAALLGLLGATVVAAVSS. An intrachain disulfide couples C36 to C57. A compositionally biased stretch (basic and acidic residues) spans 67-90; sequence ELKNEEKSENENTRFEVRLLRDPA. The segment at 67–483 is disordered; it reads ELKNEEKSEN…GKQYAPHHIT (417 aa). Position 74 is a phosphoserine (S74). Residues T79 and T92 each carry the phosphothreonine modification. Phosphoserine is present on residues S93, S99, S100, and S104. O-linked (Xyl...) (chondroitin sulfate) serine glycosylation occurs at S93. A glycan (O-linked (GalNAc...) threonine) is linked at T113. 2 stretches are compositionally biased toward basic and acidic residues: residues 119–128 and 137–173; these read SGGHSRERAG and KEAK…ERLS. 3 positions are modified to phosphoserine: S123, S146, and S168. Residues 182-191 show a composition bias toward polar residues; that stretch reads AFLNQRNQTP. O-linked (GalNAc...) threonine glycosylation is present at T190. A Phosphoserine modification is found at S205. The span at 208–228 shows a compositional bias: basic and acidic residues; sequence GLEKSHSRERSSQESGEETKS. Residue S222 is glycosylated (O-linked (Xyl...) (chondroitin sulfate) serine). The span at 260–270 shows a compositional bias: basic residues; that stretch reads RHSRPRHHHGR. Phosphoserine occurs at positions 276, 277, and 295. Y315 carries the post-translational modification Sulfotyrosine. Residues 340-361 show a composition bias toward basic and acidic residues; that stretch reads GRGEHQALRRPSEESLEQENKR. A phosphoserine mark is found at S351 and S354. The residue at position 374 (Y374) is a Phosphotyrosine. Phosphoserine is present on residues S375 and S378. Residues 406–425 show a composition bias toward basic and acidic residues; it reads TDEKRFLGETHHRVQESQRD. Y441 bears the Sulfotyrosine mark. 2 stretches are compositionally biased toward basic and acidic residues: residues 442 to 451 and 459 to 472; these read GEEKGEEAAR and DPRD…EARL. Q476 bears the Pyrrolidone carboxylic acid; in secretogranin-1(476-566) mark. A phosphoserine mark is found at S502, S503, and S514. Y535 is subject to Sulfotyrosine. A Pyrrolidone carboxylic acid; in peptide BAM-1745 modification is found at Q567. Phosphoserine is present on S584. The interval 588–620 is disordered; it reads PDFYDSEEQMSPQHTAENEEEKAGQGVLTEEEE. The residue at position 591 (Y591) is a Sulfotyrosine. S593 and S598 each carry phosphoserine. Q634 is subject to Pyrrolidone carboxylic acid; in Secretolytin; partial.

The protein belongs to the chromogranin/secretogranin protein family. As to quaternary structure, interacts with ITPR1 in the secretory granules. O-glycosylated by the trisaccharide, GalNAc-Gal-NeuAc, on 2 sites in the N-terminal. May be glycated. In terms of processing, extensively phosphorylated. Post-translationally, differentially processed on numerous sites throughout the sequence depending on tissue type.

It is found in the cytoplasmic vesicle. The protein localises to the secretory vesicle membrane. It localises to the secreted. In terms of biological role, secretogranin-1 is a neuroendocrine secretory granule protein, which may be the precursor for other biologically active peptides. The 16 pairs of basic AA distributed throughout its sequence may be used as proteolytic cleavage sites. Its function is as follows. Secretolytin has antibacterial activity. The sequence is that of Secretogranin-1 (CHGB) from Bos taurus (Bovine).